We begin with the raw amino-acid sequence, 313 residues long: Protein FixB (313 aa).

255–283 (LYLAVGISGQIQHMVGANASQTIFAINKD) contacts FAD.

It belongs to the ETF alpha-subunit/FixB family. As to quaternary structure, heterodimer of FixA and FixB.

The protein operates within amine and polyamine metabolism; carnitine metabolism. Required for anaerobic carnitine reduction. May bring reductant to CaiA. The protein is Protein FixB of Escherichia coli O127:H6 (strain E2348/69 / EPEC).